The chain runs to 359 residues: Large ribosomal subunit protein uL3 (359 aa).

The interval 336–359 (VRPPAKRPPAEAPQITYISRESKQ) is disordered.

It belongs to the universal ribosomal protein uL3 family. Part of the 50S ribosomal subunit. Forms a cluster with proteins L14 and L24e.

Functionally, one of the primary rRNA binding proteins, it binds directly near the 3'-end of the 23S rRNA, where it nucleates assembly of the 50S subunit. In Thermococcus sibiricus (strain DSM 12597 / MM 739), this protein is Large ribosomal subunit protein uL3.